Consider the following 728-residue polypeptide: 1,4-alpha-glucan branching enzyme GlgB (728 aa).

The Nucleophile role is filled by D405. E458 acts as the Proton donor in catalysis.

The protein belongs to the glycosyl hydrolase 13 family. GlgB subfamily. As to quaternary structure, monomer.

The catalysed reaction is Transfers a segment of a (1-&gt;4)-alpha-D-glucan chain to a primary hydroxy group in a similar glucan chain.. It functions in the pathway glycan biosynthesis; glycogen biosynthesis. Functionally, catalyzes the formation of the alpha-1,6-glucosidic linkages in glycogen by scission of a 1,4-alpha-linked oligosaccharide from growing alpha-1,4-glucan chains and the subsequent attachment of the oligosaccharide to the alpha-1,6 position. This chain is 1,4-alpha-glucan branching enzyme GlgB, found in Shigella flexneri.